The primary structure comprises 365 residues: 3-dehydroquinate synthase (365 aa).

NAD(+) is bound by residues 69–74, 103–107, 127–128, K140, and K149; these read DGEAHK, GVIGD, and TT. 3 residues coordinate Zn(2+): E182, H245, and H262.

Belongs to the sugar phosphate cyclases superfamily. Dehydroquinate synthase family. The cofactor is Co(2+). Requires Zn(2+) as cofactor. It depends on NAD(+) as a cofactor.

It is found in the cytoplasm. The enzyme catalyses 7-phospho-2-dehydro-3-deoxy-D-arabino-heptonate = 3-dehydroquinate + phosphate. It participates in metabolic intermediate biosynthesis; chorismate biosynthesis; chorismate from D-erythrose 4-phosphate and phosphoenolpyruvate: step 2/7. Functionally, catalyzes the conversion of 3-deoxy-D-arabino-heptulosonate 7-phosphate (DAHP) to dehydroquinate (DHQ). This is 3-dehydroquinate synthase from Pseudomonas putida (strain ATCC 700007 / DSM 6899 / JCM 31910 / BCRC 17059 / LMG 24140 / F1).